The primary structure comprises 57 residues: Small hydrophobic protein (57 aa).

At 1–8 (MPAIQPPL) the chain is on the virion surface side. Residues 9 to 29 (YLTFLLLMLLYRIITLYVWSL) traverse the membrane as a helical segment. Residues 30-57 (STITYKTSVRHASLYQRSFFRWSVDHSL) lie on the Intravirion side of the membrane.

It belongs to the rubulavirus small hydrophobic protein family. In terms of assembly, interacts with host TNFRSF1A, RIPK1 and IRAK1; these interactions interfere with host NF-kappa-B activation at the level of receptor complexes. Interacts with host protein UBQLN4.

Its subcellular location is the virion membrane. The protein resides in the host cell membrane. Functionally, plays a role in the inhibition of the host NF-kappa-B pathway. This inhibition occurs at the receptor level, by preventing the signaling of TNFR1 as well as IL-1R and TLR3. The protein is Small hydrophobic protein (SH) of Mumps virus (strain Edingburgh 4) (MuV).